Consider the following 334-residue polypeptide: Cyclin N-terminal domain-containing protein 1 (334 aa).

Residues 29 to 180 (NALLHLAQQN…ILKSLNFQIN (152 aa)) form the Cyclin N-terminal domain.

Interacts with PRR19; this interaction promotes crossover formation. Interacts with RFC3 and RFC4; these interactions facilitate crossover formation. Interacts with CDC34; this interaction regulates the cell-cycle progression. Isoform 2 is expressed in spermatocyte.

It localises to the nucleus. Its subcellular location is the cytoplasm. The protein localises to the chromosome. In terms of biological role, plays a role in the different steps of crossover formation during meiotic recombination. Participates in the crossover differentiation step of crossover-specific recombination intermediates through its interaction with PRR19. In addition, stimulates crossover formation through the interactions with RFC3 and RFC4 and simultaneously regulates cell-cycle progression through interactions with CDC34 and subsequent ubiquitination of WEE1. May also participates in an active deselection process that destabilizes or removes excess pre-CO intermediates. The protein is Cyclin N-terminal domain-containing protein 1 of Mus musculus (Mouse).